A 302-amino-acid chain; its full sequence is GTP cyclohydrolase FolE2 (302 aa).

The protein belongs to the GTP cyclohydrolase IV family.

The catalysed reaction is GTP + H2O = 7,8-dihydroneopterin 3'-triphosphate + formate + H(+). The protein operates within cofactor biosynthesis; 7,8-dihydroneopterin triphosphate biosynthesis; 7,8-dihydroneopterin triphosphate from GTP: step 1/1. In terms of biological role, converts GTP to 7,8-dihydroneopterin triphosphate. The polypeptide is GTP cyclohydrolase FolE2 (Pseudoalteromonas translucida (strain TAC 125)).